A 67-amino-acid chain; its full sequence is Large ribosomal subunit protein bL35 (67 aa).

The protein belongs to the bacterial ribosomal protein bL35 family.

In Leptospira interrogans serogroup Icterohaemorrhagiae serovar Lai (strain 56601), this protein is Large ribosomal subunit protein bL35.